Here is a 1010-residue protein sequence, read N- to C-terminus: Pre-mRNA-splicing factor cwc22 (1010 aa).

Over residues 1–10 (MASADMSPSR) the composition is skewed to polar residues. A disordered region spans residues 1 to 166 (MASADMSPSR…RTPTPPPVAV (166 aa)). Over residues 18-28 (RSPSPRTQSPS) the composition is skewed to low complexity. 2 stretches are compositionally biased toward basic and acidic residues: residues 29–39 (PRDEDGSRSPG) and 65–78 (PRRD…DQPH). Low complexity predominate over residues 84-109 (RSPTPRSQSPSRRSVRSPSPRQGSPA). The segment covering 142-158 (RHRDAGGDYRPVRKERT) has biased composition (basic and acidic residues). Residues 222-405 (KKSVNGLVNK…EVLFQVRKDK (184 aa)) enclose the MIF4G domain. Positions 466–498 (GEASDDDEDDDDDDESESGSESEDEEQKALEIK) are disordered. The span at 468 to 491 (ASDDDEDDDDDDESESGSESEDEE) shows a compositional bias: acidic residues. The MI domain occupies 507–623 (NLRRTIYLSI…GWHVFSVIHL (117 aa)). The tract at residues 708–1010 (LPAPPADSDS…SPVAKRGRVD (303 aa)) is disordered. Residues 718–732 (ESVSSYSSYSSYSSR) are compositionally biased toward low complexity. Basic residues predominate over residues 753–775 (PPRRGRGRSYSRTPSRSRSRSRS). Over residues 776–787 (YSRSVSKSVSRS) the composition is skewed to low complexity. 2 stretches are compositionally biased toward basic residues: residues 834 to 846 (RRGR…RSRS) and 899 to 910 (RLRRGSYSRSRS). Low complexity predominate over residues 911–935 (RSPIPIRGNGPAGRDTGRAGPAPAR). Basic residues predominate over residues 936-948 (GGRRNRSYSRSRT). Residues 961–973 (SRRVVSRSPSPVV) show a composition bias toward low complexity. The segment covering 976-1010 (NKRRRSYSSSRSRSRSSSRSRYRSRSPVAKRGRVD) has biased composition (basic residues).

The protein belongs to the CWC22 family. As to quaternary structure, associated with the spliceosome.

It is found in the cytoplasm. The protein resides in the nucleus. Involved in pre-mRNA splicing. The chain is Pre-mRNA-splicing factor cwc22 (msp-1) from Neurospora crassa (strain ATCC 24698 / 74-OR23-1A / CBS 708.71 / DSM 1257 / FGSC 987).